The following is a 222-amino-acid chain: Charged multivesicular body protein 4b (222 aa).

Disordered regions lie at residues 1–21 (MSLIGKLFGTGGKGAKGPSPQ) and 177–222 (NLLE…WATA). The stretch at 21–182 (QEAIQKLRDT…ELDKNLLEVQ (162 aa)) forms a coiled coil.

It belongs to the SNF7 family. In terms of assembly, probable core component of the endosomal sorting required for transport complex III (ESCRT-III). ESCRT-III components are thought to multimerize to form a flat lattice on the perimeter membrane of the endosome.

The protein localises to the cytoplasm. It localises to the cytosol. The protein resides in the late endosome membrane. It is found in the midbody. Functionally, probable core component of the endosomal sorting required for transport complex III (ESCRT-III) which is involved in multivesicular bodies (MVBs) formation and sorting of endosomal cargo proteins into MVBs. MVBs contain intraluminal vesicles (ILVs) that are generated by invagination and scission from the limiting membrane of the endosome and mostly are delivered to lysosomes enabling degradation of membrane proteins, such as stimulated growth factor receptors, lysosomal enzymes and lipids. This chain is Charged multivesicular body protein 4b (chmp4b), found in Xenopus laevis (African clawed frog).